A 71-amino-acid chain; its full sequence is Translation initiation factor IF-1 (71 aa).

Residues 1 to 71 (MAKQSAIEQD…LSKARITYRY (71 aa)) form the S1-like domain.

Belongs to the IF-1 family. As to quaternary structure, component of the 30S ribosomal translation pre-initiation complex which assembles on the 30S ribosome in the order IF-2 and IF-3, IF-1 and N-formylmethionyl-tRNA(fMet); mRNA recruitment can occur at any time during PIC assembly.

The protein resides in the cytoplasm. One of the essential components for the initiation of protein synthesis. Stabilizes the binding of IF-2 and IF-3 on the 30S subunit to which N-formylmethionyl-tRNA(fMet) subsequently binds. Helps modulate mRNA selection, yielding the 30S pre-initiation complex (PIC). Upon addition of the 50S ribosomal subunit IF-1, IF-2 and IF-3 are released leaving the mature 70S translation initiation complex. The protein is Translation initiation factor IF-1 of Flavobacterium psychrophilum (strain ATCC 49511 / DSM 21280 / CIP 103535 / JIP02/86).